Here is a 458-residue protein sequence, read N- to C-terminus: Ig mu chain C region secreted form (458 aa).

The segment at 1–106 (VSLSSPTLYP…SNRDLRVSFP (106 aa)) is CH1. A disulfide bridge connects residues Cys-28 and Cys-90. Asn-46 and Asn-114 each carry an N-linked (GlcNAc...) asparagine glycan. A CH2 region spans residues 107 to 222 (VDSELPPNVS…VSMSSECSTT (116 aa)). A disulfide bridge connects residues Cys-137 and Cys-200. N-linked (GlcNAc...) asparagine glycosylation is found at Asn-212, Asn-261, Asn-277, and Asn-284. A CH3 region spans residues 223–327 (PSPGIQVFPI…PLKHTISKSR (105 aa)). Cystine bridges form between Cys-249–Cys-308 and Cys-356–Cys-418. Residues 328–458 (EVAKHPPAVY…IMSDTASTCY (131 aa)) are CH4. N-linked (GlcNAc...) asparagine glycosylation occurs at Asn-445.

Its subcellular location is the secreted. The sequence is that of Ig mu chain C region secreted form from Oryctolagus cuniculus (Rabbit).